The sequence spans 163 residues: Transcriptional repressor NrdR (163 aa).

The segment at Cys3 to Cys34 is a zinc-finger region. Residues Leu46 to Asp136 enclose the ATP-cone domain.

This sequence belongs to the NrdR family. Zn(2+) serves as cofactor.

Negatively regulates transcription of bacterial ribonucleotide reductase nrd genes and operons by binding to NrdR-boxes. This Corynebacterium jeikeium (strain K411) protein is Transcriptional repressor NrdR.